A 338-amino-acid polypeptide reads, in one-letter code: Anthranilate phosphoribosyltransferase (338 aa).

Residues glycine 78, 81 to 82, threonine 86, 88 to 91, 106 to 114, and serine 118 each bind 5-phospho-alpha-D-ribose 1-diphosphate; these read GD, NIST, and KHGNRSVSS. Residue glycine 78 participates in anthranilate binding. Mg(2+) is bound at residue serine 90. An anthranilate-binding site is contributed by asparagine 109. Arginine 164 serves as a coordination point for anthranilate. Mg(2+) is bound by residues aspartate 223 and glutamate 224.

The protein belongs to the anthranilate phosphoribosyltransferase family. Homodimer. Mg(2+) is required as a cofactor.

It catalyses the reaction N-(5-phospho-beta-D-ribosyl)anthranilate + diphosphate = 5-phospho-alpha-D-ribose 1-diphosphate + anthranilate. Its pathway is amino-acid biosynthesis; L-tryptophan biosynthesis; L-tryptophan from chorismate: step 2/5. Catalyzes the transfer of the phosphoribosyl group of 5-phosphorylribose-1-pyrophosphate (PRPP) to anthranilate to yield N-(5'-phosphoribosyl)-anthranilate (PRA). This chain is Anthranilate phosphoribosyltransferase, found in Bacillus velezensis (strain DSM 23117 / BGSC 10A6 / LMG 26770 / FZB42) (Bacillus amyloliquefaciens subsp. plantarum).